Reading from the N-terminus, the 180-residue chain is dCTP deaminase, dUMP-forming (180 aa).

DCTP-binding positions include Arg-100–Arg-105, Asp-117, Thr-125–Glu-127, Gln-146, Tyr-160, and Gln-167. Glu-127 acts as the Proton donor/acceptor in catalysis.

The protein belongs to the dCTP deaminase family. As to quaternary structure, homotrimer.

The catalysed reaction is dCTP + 2 H2O = dUMP + NH4(+) + diphosphate. It participates in pyrimidine metabolism; dUMP biosynthesis; dUMP from dCTP: step 1/1. Its function is as follows. Bifunctional enzyme that catalyzes both the deamination of dCTP to dUTP and the hydrolysis of dUTP to dUMP without releasing the toxic dUTP intermediate. The chain is dCTP deaminase, dUMP-forming from Sulfurihydrogenibium sp. (strain YO3AOP1).